A 90-amino-acid chain; its full sequence is Small ribosomal subunit protein uS15c (90 aa).

It belongs to the universal ribosomal protein uS15 family. In terms of assembly, part of the 30S ribosomal subunit.

It localises to the plastid. The protein resides in the chloroplast. The chain is Small ribosomal subunit protein uS15c (rps15) from Phaseolus vulgaris (Kidney bean).